A 649-amino-acid chain; its full sequence is Acetyl-coenzyme A synthetase (649 aa).

CoA is bound by residues 191 to 194 (RGGR), T312, and N336. ATP-binding positions include 388 to 390 (GEP), 412 to 417 (DTWWQT), D501, and R516. S524 contributes to the CoA binding site. R527 is a binding site for ATP. 3 residues coordinate Mg(2+): V538, H540, and V543. R585 serves as a coordination point for CoA. The residue at position 610 (K610) is an N6-acetyllysine.

Belongs to the ATP-dependent AMP-binding enzyme family. Mg(2+) serves as cofactor. In terms of processing, acetylated. Deacetylation by the SIR2-homolog deacetylase activates the enzyme.

The catalysed reaction is acetate + ATP + CoA = acetyl-CoA + AMP + diphosphate. Catalyzes the conversion of acetate into acetyl-CoA (AcCoA), an essential intermediate at the junction of anabolic and catabolic pathways. AcsA undergoes a two-step reaction. In the first half reaction, AcsA combines acetate with ATP to form acetyl-adenylate (AcAMP) intermediate. In the second half reaction, it can then transfer the acetyl group from AcAMP to the sulfhydryl group of CoA, forming the product AcCoA. In Marinobacter nauticus (strain ATCC 700491 / DSM 11845 / VT8) (Marinobacter aquaeolei), this protein is Acetyl-coenzyme A synthetase.